The primary structure comprises 246 residues: Small ribosomal subunit protein uS2 (246 aa).

The protein belongs to the universal ribosomal protein uS2 family.

This Burkholderia vietnamiensis (strain G4 / LMG 22486) (Burkholderia cepacia (strain R1808)) protein is Small ribosomal subunit protein uS2.